Here is a 393-residue protein sequence, read N- to C-terminus: uncharacterized protein (393 aa).

The tract at residues 164 to 183 (ASDPHPGKNSPASPTGENKE) is disordered. The segment covering 173–183 (SPASPTGENKE) has biased composition (polar residues).

This is an uncharacterized protein from Treponema pallidum (strain Nichols).